The sequence spans 361 residues: tRNA-specific 2-thiouridylase MnmA (361 aa).

ATP-binding positions include G11–S18 and M37. C106 serves as the catalytic Nucleophile. Residues C106 and C202 are joined by a disulfide bond. Residue G130 participates in ATP binding. The interaction with tRNA stretch occupies residues K152 to Q154. The active-site Cysteine persulfide intermediate is C202. Positions R308–Y309 are interaction with tRNA.

The protein belongs to the MnmA/TRMU family.

The protein localises to the cytoplasm. The catalysed reaction is S-sulfanyl-L-cysteinyl-[protein] + uridine(34) in tRNA + AH2 + ATP = 2-thiouridine(34) in tRNA + L-cysteinyl-[protein] + A + AMP + diphosphate + H(+). In terms of biological role, catalyzes the 2-thiolation of uridine at the wobble position (U34) of tRNA, leading to the formation of s(2)U34. This Clostridium botulinum (strain Alaska E43 / Type E3) protein is tRNA-specific 2-thiouridylase MnmA.